A 257-amino-acid polypeptide reads, in one-letter code: Receptor expression-enhancing protein 4 (257 aa).

Helical transmembrane passes span 1 to 21 (MVSW…CPAY) and 42 to 62 (WIVF…ISWF). Phosphoserine is present on residues Ser152 and Ser194. The disordered stretch occupies residues 183–257 (PIGYRAGGLQ…KKTVPSDVDS (75 aa)). Residue Thr196 is modified to Phosphothreonine. Ser202 is modified (phosphoserine). Thr250 bears the Phosphothreonine mark. Ser253 carries the post-translational modification Phosphoserine.

This sequence belongs to the DP1 family. As to expression, expressed in circumvallate papillae and testis.

It localises to the endoplasmic reticulum membrane. Microtubule-binding protein required to ensure proper cell division and nuclear envelope reassembly by sequestering the endoplasmic reticulum away from chromosomes during mitosis. Probably acts by clearing the endoplasmic reticulum membrane from metaphase chromosomes. In Homo sapiens (Human), this protein is Receptor expression-enhancing protein 4 (REEP4).